The chain runs to 292 residues: Probable endonuclease lcl3 (292 aa).

The segment at 1 to 27 is disordered; sequence MRWPPWSSESTNDEQKQTPSSWLSSAA. The span at 17–27 shows a compositional bias: polar residues; it reads QTPSSWLSSAA. Residues 45 to 61 traverse the membrane as a helical segment; that stretch reads IIPTVVLTSGILIAVRF. The TNase-like domain maps to 83–250; the sequence is RSIFGQVTSV…KKRARGLWKD (168 aa). Arginine 134 is a catalytic residue. Ca(2+) is bound at residue aspartate 139. Active-site residues include glutamate 142 and arginine 182. A disordered region spans residues 257–292; that stretch reads GWESPREYKNRMGMGDPLPIEKGNGKGNGKGKIGQK. Gly residues predominate over residues 281–292; it reads GKGNGKGKIGQK.

It belongs to the LCL3 family.

The protein resides in the mitochondrion. It localises to the membrane. The sequence is that of Probable endonuclease lcl3 (lcl3) from Penicillium rubens (strain ATCC 28089 / DSM 1075 / NRRL 1951 / Wisconsin 54-1255) (Penicillium chrysogenum).